A 204-amino-acid chain; its full sequence is Large ribosomal subunit protein eL15 (204 aa).

It belongs to the eukaryotic ribosomal protein eL15 family.

The polypeptide is Large ribosomal subunit protein eL15 (RpL15) (Anopheles gambiae (African malaria mosquito)).